A 596-amino-acid polypeptide reads, in one-letter code: Zinc finger E-box-binding homeobox protein zag-1 (596 aa).

Residues 24-46 form a C2H2-type 1 zinc finger; sequence FKCPECTKAFKFKHHLKEHIRIH. Residues 52–72 form a C2H2-type 2; degenerate zinc finger; the sequence is FECQQCHKRFSHSGSYSSHMS. Residues 133 to 145 show a composition bias toward polar residues; the sequence is LENGTSPTPTQEP. 3 disordered regions span residues 133-225, 324-369, and 395-421; these read LENG…RPLR, NNSL…EPEW, and GFVT…GSSS. Residues 165–179 are compositionally biased toward basic and acidic residues; that stretch reads SEVKTEVKTEVKTED. Polar residues predominate over residues 188–200; it reads PAVSMSLSPAPEQ. The segment covering 201–216 has biased composition (low complexity); it reads NGNESMNNGGSGSDGK. The homeobox DNA-binding region spans 223–282; it reads PLRSRSFLNDSQVAVLQNHFKRNPFPSKYELSAVAEQIGVNKRVVQVWFQNTRAKERRSN. Basic and acidic residues predominate over residues 331–355; it reads QDERNNENTDEVMDHDGLKDGKETP. C2H2-type zinc fingers lie at residues 481-503 and 509-531; these read FSCD…KYEH and YKCD…KRLH. Residues 537-560 form a C2H2-type 5; degenerate zinc finger; sequence FQCDKCLKRFSHSGSYSQHMNHRY. The disordered stretch occupies residues 569–596; the sequence is QPASPSDVLNGGSVTVSPSSSNTPPPST. The span at 578–590 shows a compositional bias: low complexity; sequence NGGSVTVSPSSSN.

Expressed in the six touch receptor neurons (TRNs) but not in the FLP and PVD neurons. Expressed in the M4 cholinergic motor neuron.

It localises to the nucleus. Functionally, transcription factor. Down-regulates expression of genes involved in either the synthesis or reuptake of serotonin, dopamine and GABA. Acts as a transcriptional repressor to regulate multiple, discrete, neuron-specific aspects of terminal differentiation, including cell migration, axonal development and gene expression. Promotes touch receptor neuron differentiation by repressing the expression of egl-44 and egl-46. As egl-44 and egl-46, probably acting as a heterodimer, repress expression of zag-1 in FLP neurons, together these proteins form a bistable, negative-feedback loop that regulates the choice between neuronal fates. Required for axon guidance. Involved in the proper development of the pharynx. Required for pharynx isthmus peristalsis, probably via a role in the differentiation of the M4 cholinergic motor neuron. Directly represses its own transcription by interacting with conserved E-box sequence motifs 5'-CACCTG-3' in its own promoter. May also act as a transcriptional activator of the homeodomain ceh-28. The chain is Zinc finger E-box-binding homeobox protein zag-1 from Caenorhabditis elegans.